Here is a 1155-residue protein sequence, read N- to C-terminus: DNA-directed RNA polymerase subunit beta (1155 aa).

Belongs to the RNA polymerase beta chain family. The RNAP catalytic core consists of 2 alpha, 1 beta, 1 beta' and 1 omega subunit. When a sigma factor is associated with the core the holoenzyme is formed, which can initiate transcription.

The enzyme catalyses RNA(n) + a ribonucleoside 5'-triphosphate = RNA(n+1) + diphosphate. Its function is as follows. DNA-dependent RNA polymerase catalyzes the transcription of DNA into RNA using the four ribonucleoside triphosphates as substrates. The polypeptide is DNA-directed RNA polymerase subunit beta (Borrelia hermsii (strain HS1 / DAH)).